The following is a 388-amino-acid chain: MISKKLIIELLKQLISFKSVTPNDNGAIDFITNLLVKQGFKVYVKEFGQEYKVKNLYGYFGNGQPNICFAGHIDVVPAGFIEQWKYPPFCATQYKDKIYGRGVVDMKGAISAMLSAVFCFIDNNNDFNGTISFLITADEEGEALFGTKKMLEWINKQGHKIDFTILGEPTCTDKIGDTIKIGRRGSINFDLKVFGKQGHVAYPHLAINPNHLIVKILNSFIGSKIDEGNEFFAPSNLEVVSIDTNNNITNIIPEIAQSKFNIRFNDIHTNEQLLEIVKKNIEQFTTNYDLQSSCRSRPFLAKMSPYIFSFKELVHKVTKIKPEFSTSGGTSDAYFFKDYSPIVEFGLLNTMAHKINEYCLINDLQTLCRVYYNALCLFLMSNSKFRTN.

Position 72 (H72) interacts with Zn(2+). D74 is an active-site residue. D105 is a Zn(2+) binding site. Catalysis depends on E139, which acts as the Proton acceptor. 3 residues coordinate Zn(2+): E140, E168, and H353.

It belongs to the peptidase M20A family. DapE subfamily. In terms of assembly, homodimer. Zn(2+) serves as cofactor. Co(2+) is required as a cofactor.

The enzyme catalyses N-succinyl-(2S,6S)-2,6-diaminopimelate + H2O = (2S,6S)-2,6-diaminopimelate + succinate. Its pathway is amino-acid biosynthesis; L-lysine biosynthesis via DAP pathway; LL-2,6-diaminopimelate from (S)-tetrahydrodipicolinate (succinylase route): step 3/3. In terms of biological role, catalyzes the hydrolysis of N-succinyl-L,L-diaminopimelic acid (SDAP), forming succinate and LL-2,6-diaminopimelate (DAP), an intermediate involved in the bacterial biosynthesis of lysine and meso-diaminopimelic acid, an essential component of bacterial cell walls. This is Succinyl-diaminopimelate desuccinylase from Orientia tsutsugamushi (strain Ikeda) (Rickettsia tsutsugamushi).